A 278-amino-acid polypeptide reads, in one-letter code: Energy-coupling factor transporter ATP-binding protein EcfA1 (278 aa).

The ABC transporter domain maps to 5–239 (IRVQHLNYTY…GMELLRLGLD (235 aa)). 39-46 (GHNGSGKS) is an ATP binding site. Residue glutamate 165 is the Proton acceptor of the active site.

It belongs to the ABC transporter superfamily. Energy-coupling factor EcfA family. As to quaternary structure, forms a stable energy-coupling factor (ECF) transporter complex probably composed of 2 membrane-embedded substrate-binding proteins (S component), 2 ATP-binding proteins (A component) and 2 transmembrane proteins (T component). This complex interacts with a number of substrate-specific components, including FolT and ThiT for 5-formyltetrahydrofolate and thiamine respectively.

It localises to the cell membrane. Functionally, ATP-binding (A) component of a common energy-coupling factor (ECF) ABC-transporter complex. Unlike classic ABC transporters this ECF transporter provides the energy necessary to transport a number of different substrates including 5-formyltetrahydrofolate and thiamine. Expression of the complex plus FolT or ThiT in Lactococcus lactis subsp. cremoris (strain NZ9000) allows 5-formyltetrahydrofolate or thiamine uptake respectively; 5-formyltetrahydrofolate or thiamine are not taken up in the absence of FolT/ThiT or the EcfA1A2T complex. Deenergized L.lactis subsp. cremoris (treated with 2-deoxyglucose) does not take up substrate. The polypeptide is Energy-coupling factor transporter ATP-binding protein EcfA1 (Lacticaseibacillus paracasei (strain ATCC 334 / BCRC 17002 / CCUG 31169 / CIP 107868 / KCTC 3260 / NRRL B-441) (Lactobacillus paracasei)).